A 1257-amino-acid chain; its full sequence is Period circadian protein homolog 2 (1257 aa).

The disordered stretch occupies residues 1–60 (MNGYVDFSPSPTSPTKEPGAPQPTQAVLQEDVDMSSGSSGNENCSTGRDSQGSDCDDNGK). Polar residues predominate over residues 35–53 (SSGSSGNENCSTGRDSQGS). A Nuclear export signal 1 motif is present at residues 109-118 (LIRTLKELKV). Residues 179–246 (ITSEYIVKNA…FHSYTTPYKL (68 aa)) enclose the PAS 1 domain. An LXXLL motif is present at residues 306–310 (LCCLL). In terms of domain architecture, PAS 2 spans 319-385 (YEAPRIPPEK…MLAIHKKILQ (67 aa)). In terms of domain architecture, PAC spans 393 to 436 (YSPIRFRTRNGEYITLDTSWSSFINPWSRKISFIIGRHKVRVGP). The short motif at 460–469 (LTEQIHRLLM) is the Nuclear export signal 2 element. Disordered regions lie at residues 471–565 (PVPH…GASL) and 617–638 (PSRKATVSPGLHSGEAARPSKV). The segment at 478 to 482 (SGYGS) is important for protein stability. The segment covering 493-504 (MSQTSSSDSNGQ) has biased composition (polar residues). The interval 510–709 (RRSGIFKTSG…GAAGGLSQEK (200 aa)) is CSNK1E binding domain. Residues serine 525, serine 528, serine 531, serine 538, and serine 544 each carry the phosphoserine modification. Position 554 is a phosphothreonine (threonine 554). Residues serine 659, serine 693, serine 697, serine 706, serine 758, and serine 763 each carry the phosphoserine modification. The disordered stretch occupies residues 757 to 832 (RSRAQASDRG…SDTSQSSCPS (76 aa)). The short motif at 778–794 (KKTGKNRKLKSKRVKTR) is the Nuclear localization signal element. Positions 779–792 (KTGKNRKLKSKRVK) are enriched in basic residues. The segment covering 821–832 (SPSDTSQSSCPS) has biased composition (low complexity). A Phosphothreonine modification is found at threonine 858. The interaction with PPARG stretch occupies residues 882–1067 (EFAVQPLPFA…DLCSATGSAL (186 aa)). Serine 939 carries the post-translational modification Phosphoserine. Phosphothreonine is present on threonine 964. A Phosphoserine modification is found at serine 971. A Nuclear export signal 3 motif is present at residues 983–990 (LQLNLLQL). The interval 994-1044 (PEGSTGAAGTLGTTGTAASGLDCTSGTSRDRQPKAPPTCNEPSDTQNSDAI) is disordered. The span at 996-1014 (GSTGAAGTLGTTGTAASGL) shows a compositional bias: low complexity. The segment covering 1033–1044 (NEPSDTQNSDAI) has biased composition (polar residues). The short motif at 1051–1055 (LNLLL) is the LXXLL element. The span at 1070–1092 (SGASATSDSLGSSSLGFGTSQSG) shows a compositional bias: low complexity. The disordered stretch occupies residues 1070–1115 (SGASATSDSLGSSSLGFGTSQSGAGSSDTSHTSKYFGSIDSSENNH). Over residues 1093–1111 (AGSSDTSHTSKYFGSIDSS) the composition is skewed to polar residues. A Phosphoserine modification is found at serine 1126. The interval 1157–1257 (SRDLQAVLKE…LTGPRIEAQT (101 aa)) is CRY binding domain. The interval 1224-1257 (PYEEDSPSPGLCDTSEAKEEEGEQLTGPRIEAQT) is disordered.

As to quaternary structure, homodimer. Component of the circadian core oscillator, which includes the CRY proteins, CLOCK or NPAS2, BMAL1 or BMAL2, CSNK1D and/or CSNK1E, TIMELESS, and the PER proteins. Interacts with CLOCK-BMAL1 (off DNA). Interacts with BMAL2. Interacts directly with PER1 and PER3, and through a C-terminal domain, with CRY1 and CRY2. Interacts (via PAS 2 domain) with TIMELESS. Interacts with NFIL3. Different large complexes have been identified with different repressive functions. The core of PER complexes is composed of at least PER1, PER2, PER3, CRY1, CRY2, CSNK1D and/or CSNK1E. The large PER complex involved in the repression of transcriptional termination is composed of at least PER2, CDK9, DDX5, DHX9, NCBP1 and POLR2A (active). The large PER complex involved in the histone deacetylation is composed of at least HDAC1, PER2, SFPQ and SIN3A. The large PER complex involved in the histone methylation is composed of at least PER2, CBX3, TRIM28, SUV39H1 and/or SUV39H2; CBX3 mediates the formation of the complex. Interacts with SETX; the interaction inhibits termination of circadian target genes. Interacts with the nuclear receptors HNF4A, NR1D1, NR4A2, RORA, PPARA, PPARG and THRA; the interaction with at least PPARG is ligand dependent. Interacts with PML. Interacts (phosphorylated) with BTRC and FBXW11; the interactions trigger proteasomal degradation. Interacts with NONO and SFPQ. Interacts with CAVIN3. Interacts with MAGEL2. Interacts with MAP1LC3B. Interacts with HNF4A. Post-translationally, acetylated. Deacetylated by SIRT1, resulting in decreased protein stability. Deacetylated by SIRT6, preventing its degradation by the proteasome, resulting in increased protein stability. In terms of processing, phosphorylated by CSNK1E and CSNK1D. Phosphorylation results in PER2 protein degradation. May be dephosphorylated by PP1. Ubiquitinated, leading to its proteasomal degradation. Ubiquitination may be inhibited by CRY1. In terms of tissue distribution, in the brain, high expression in SCN during the subjective day. Constitutive expression in the cornu ammonis and in the dentate gyrus of the hippocampus. Also expressed in the piriform cortex and the glomeruli of the olfactory bulb, and at a lower extent in the cerebral cortex. Not expressed in the pars tuberalis and the Purkinje neurons. Also expressed in adipose tissue (white and brown), heart, kidney, bladder, lumbar spinal cord, skeletal muscle, spleen, lung, pancreas and liver with highest levels in skeletal muscle and liver and lowest levels in spleen.

The protein localises to the nucleus. The protein resides in the cytoplasm. It localises to the perinuclear region. Its function is as follows. Transcriptional repressor which forms a core component of the circadian clock. The circadian clock, an internal time-keeping system, regulates various physiological processes through the generation of approximately 24 hour circadian rhythms in gene expression, which are translated into rhythms in metabolism and behavior. It is derived from the Latin roots 'circa' (about) and 'diem' (day) and acts as an important regulator of a wide array of physiological functions including metabolism, sleep, body temperature, blood pressure, endocrine, immune, cardiovascular, and renal function. Consists of two major components: the central clock, residing in the suprachiasmatic nucleus (SCN) of the brain, and the peripheral clocks that are present in nearly every tissue and organ system. Both the central and peripheral clocks can be reset by environmental cues, also known as Zeitgebers (German for 'timegivers'). The predominant Zeitgeber for the central clock is light, which is sensed by retina and signals directly to the SCN. The central clock entrains the peripheral clocks through neuronal and hormonal signals, body temperature and feeding-related cues, aligning all clocks with the external light/dark cycle. Circadian rhythms allow an organism to achieve temporal homeostasis with its environment at the molecular level by regulating gene expression to create a peak of protein expression once every 24 hours to control when a particular physiological process is most active with respect to the solar day. Transcription and translation of core clock components (CLOCK, NPAS2, BMAL1, BMAL2, PER1, PER2, PER3, CRY1 and CRY2) plays a critical role in rhythm generation, whereas delays imposed by post-translational modifications (PTMs) are important for determining the period (tau) of the rhythms (tau refers to the period of a rhythm and is the length, in time, of one complete cycle). A diurnal rhythm is synchronized with the day/night cycle, while the ultradian and infradian rhythms have a period shorter and longer than 24 hours, respectively. Disruptions in the circadian rhythms contribute to the pathology of cardiovascular diseases, cancer, metabolic syndrome and aging. A transcription/translation feedback loop (TTFL) forms the core of the molecular circadian clock mechanism. Transcription factors, CLOCK or NPAS2 and BMAL1 or BMAL2, form the positive limb of the feedback loop, act in the form of a heterodimer and activate the transcription of core clock genes and clock-controlled genes (involved in key metabolic processes), harboring E-box elements (5'-CACGTG-3') within their promoters. The core clock genes: PER1/2/3 and CRY1/2 which are transcriptional repressors form the negative limb of the feedback loop and interact with the CLOCK|NPAS2-BMAL1|BMAL2 heterodimer inhibiting its activity and thereby negatively regulating their own expression. This heterodimer also activates nuclear receptors NR1D1/2 and RORA/B/G, which form a second feedback loop and which activate and repress BMAL1 transcription, respectively. PER1 and PER2 proteins transport CRY1 and CRY2 into the nucleus with appropriate circadian timing, but also contribute directly to repression of clock-controlled target genes through interaction with several classes of RNA-binding proteins, helicases and others transcriptional repressors. PER appears to regulate circadian control of transcription by at least three different modes. First, interacts directly with the CLOCK-BMAL1 at the tail end of the nascent transcript peak to recruit complexes containing the SIN3-HDAC that remodel chromatin to repress transcription. Second, brings H3K9 methyltransferases such as SUV39H1 and SUV39H2 to the E-box elements of the circadian target genes, like PER2 itself or PER1. The recruitment of each repressive modifier to the DNA seems to be very precisely temporally orchestrated by the large PER complex, the deacetylases acting before than the methyltransferases. Additionally, large PER complexes are also recruited to the target genes 3' termination site through interactions with RNA-binding proteins and helicases that may play a role in transcription termination to regulate transcription independently of CLOCK-BMAL1 interactions. Recruitment of large PER complexes to the elongating polymerase at PER and CRY termination sites inhibited SETX action, impeding RNA polymerase II release and thereby repressing transcriptional reinitiation. May propagate clock information to metabolic pathways via the interaction with nuclear receptors. Coactivator of PPARA and corepressor of NR1D1, binds rhythmically at the promoter of nuclear receptors target genes like BMAL1 or G6PC1. Directly and specifically represses PPARG proadipogenic activity by blocking PPARG recruitment to target promoters and thereby transcriptional activation. Required for fatty acid and lipid metabolism, is involved as well in the regulation of circulating insulin levels. Plays an important role in the maintenance of cardiovascular functions through the regulation of NO and vasodilatatory prostaglandins production in aortas. Controls circadian glutamate uptake in synaptic vesicles through the regulation of VGLUT1 expression. May also be involved in the regulation of inflammatory processes. Represses the CLOCK-BMAL1 induced transcription of BHLHE40/DEC1 and ATF4. Negatively regulates the formation of the TIMELESS-CRY1 complex by competing with TIMELESS for binding to CRY1. In Mus musculus (Mouse), this protein is Period circadian protein homolog 2 (Per2).